The primary structure comprises 209 residues: V-type ATP synthase subunit D (209 aa).

It belongs to the V-ATPase D subunit family.

In terms of biological role, produces ATP from ADP in the presence of a proton gradient across the membrane. The sequence is that of V-type ATP synthase subunit D from Anaeromyxobacter dehalogenans (strain 2CP-1 / ATCC BAA-258).